The primary structure comprises 327 residues: Phenylalanine--tRNA ligase alpha subunit (327 aa).

A Mg(2+)-binding site is contributed by glutamate 252.

Belongs to the class-II aminoacyl-tRNA synthetase family. Phe-tRNA synthetase alpha subunit type 1 subfamily. In terms of assembly, tetramer of two alpha and two beta subunits. It depends on Mg(2+) as a cofactor.

It localises to the cytoplasm. It carries out the reaction tRNA(Phe) + L-phenylalanine + ATP = L-phenylalanyl-tRNA(Phe) + AMP + diphosphate + H(+). The sequence is that of Phenylalanine--tRNA ligase alpha subunit from Vibrio parahaemolyticus serotype O3:K6 (strain RIMD 2210633).